The chain runs to 253 residues: Pimeloyl-[acyl-carrier protein] methyl ester esterase (253 aa).

Residues Trp18, 78-79 (SL), and 139-143 (FLALD) each bind substrate. Ser78 acts as the Nucleophile in catalysis. Active-site residues include Asp203 and His231. His231 is a substrate binding site.

The protein belongs to the AB hydrolase superfamily. Carboxylesterase BioH family. In terms of assembly, monomer.

It is found in the cytoplasm. The catalysed reaction is 6-carboxyhexanoyl-[ACP] methyl ester + H2O = 6-carboxyhexanoyl-[ACP] + methanol + H(+). The protein operates within cofactor biosynthesis; biotin biosynthesis. In terms of biological role, the physiological role of BioH is to remove the methyl group introduced by BioC when the pimeloyl moiety is complete. It allows to synthesize pimeloyl-ACP via the fatty acid synthetic pathway through the hydrolysis of the ester bonds of pimeloyl-ACP esters. The protein is Pimeloyl-[acyl-carrier protein] methyl ester esterase of Xanthomonas axonopodis pv. citri (strain 306).